Reading from the N-terminus, the 341-residue chain is Tetraacyldisaccharide 4'-kinase (341 aa).

Position 54 to 61 (54 to 61) interacts with ATP; sequence TVGGAGKT.

Belongs to the LpxK family.

It carries out the reaction a lipid A disaccharide + ATP = a lipid IVA + ADP + H(+). Its pathway is glycolipid biosynthesis; lipid IV(A) biosynthesis; lipid IV(A) from (3R)-3-hydroxytetradecanoyl-[acyl-carrier-protein] and UDP-N-acetyl-alpha-D-glucosamine: step 6/6. Functionally, transfers the gamma-phosphate of ATP to the 4'-position of a tetraacyldisaccharide 1-phosphate intermediate (termed DS-1-P) to form tetraacyldisaccharide 1,4'-bis-phosphate (lipid IVA). This chain is Tetraacyldisaccharide 4'-kinase, found in Brucella melitensis biotype 1 (strain ATCC 23456 / CCUG 17765 / NCTC 10094 / 16M).